The chain runs to 1546 residues: Lysophospholipase NTE1 (1546 aa).

Residues 1 to 45 lie on the Cytoplasmic side of the membrane; it reads MKDSTEALNSIAFAVDTTLSSILPSSLAPPSAPPATSSFLKSIWY. Residues 46 to 66 form a helical membrane-spanning segment; sequence AFWWLWSMVVFKIMNIILLYI. The Lumenal portion of the chain corresponds to 67–81; sequence PSKIMNALSINFEIT. Residues 82–102 traverse the membrane as a helical segment; that stretch reads LNLSSILVALSAIITVCFLVV. Residues 103 to 1546 lie on the Cytoplasmic side of the membrane; sequence RYKYLTGYSK…KKVLYRRNSI (1444 aa). A nucleoside 3',5'-cyclic phosphate is bound by residues 689–820 and 816–965; these read PTEF…LKKL and KLKK…VASK. The 165-residue stretch at 1239–1403 folds into the PNPLA domain; it reads LVLGGGGSRG…LDNLPVSEMK (165 aa). Residues 1243–1248 carry the GXGXXG motif; it reads GGGSRG. Positions 1270-1274 match the GXSXG motif; that stretch reads GTSIG. Ser1272 serves as the catalytic Nucleophile. Asp1390 serves as the catalytic Proton acceptor. The DGA/G signature appears at 1390-1392; that stretch reads DGG.

The protein belongs to the NTE family.

It localises to the endoplasmic reticulum membrane. It carries out the reaction a 1-acyl-sn-glycero-3-phosphocholine + H2O = sn-glycerol 3-phosphocholine + a fatty acid + H(+). Its activity is regulated as follows. Inhibited by organophosphorus esters. Intracellular phospholipase B that catalyzes the double deacylation of phosphatidylcholine (PC) to glycerophosphocholine (GroPCho). Plays an important role in membrane lipid homeostasis. Responsible for the rapid PC turnover in response to inositol, elevated temperatures, or when choline is present in the growth medium. The chain is Lysophospholipase NTE1 (NTE1) from Scheffersomyces stipitis (strain ATCC 58785 / CBS 6054 / NBRC 10063 / NRRL Y-11545) (Yeast).